We begin with the raw amino-acid sequence, 265 residues long: S-acyl fatty acid synthase thioesterase, medium chain (265 aa).

At Met1 the chain carries N-acetylmethionine. Catalysis depends on residues Ser101 and His237.

The protein belongs to the thioesterase family. In terms of assembly, interacts (via C-terminus) with FASN. In terms of tissue distribution, detected both in lactating and non-lactating breast epithelium (at protein level). Isoform 2 is up-regulated in bone marrow-derived mononuclear cells of rheumatoid arthritis patients.

It localises to the cytoplasm. The protein resides in the cytosol. It carries out the reaction (9Z)-octadecenoyl-[ACP] + H2O = (9Z)-octadecenoate + holo-[ACP] + H(+). The enzyme catalyses decanoyl-CoA + H2O = decanoate + CoA + H(+). The catalysed reaction is dodecanoyl-CoA + H2O = dodecanoate + CoA + H(+). It catalyses the reaction tetradecanoyl-CoA + H2O = tetradecanoate + CoA + H(+). It carries out the reaction hexadecanoyl-CoA + H2O = hexadecanoate + CoA + H(+). Contributes to the release of free fatty acids from fatty acid synthase (FASN). Has broad substrate specificity, giving rise to a range of free fatty acids with chain lengths between 10 and 16 carbon atoms (C10 - C16). This is S-acyl fatty acid synthase thioesterase, medium chain from Homo sapiens (Human).